A 445-amino-acid chain; its full sequence is Putative aldehyde dehydrogenase AldX (445 aa).

Catalysis depends on residues Glu-214 and Cys-248.

Belongs to the aldehyde dehydrogenase family.

The catalysed reaction is an aldehyde + NAD(+) + H2O = a carboxylate + NADH + 2 H(+). In Bacillus subtilis (strain 168), this protein is Putative aldehyde dehydrogenase AldX (aldX).